The primary structure comprises 1308 residues: Transposon TX1 uncharacterized 149 kDa protein (1308 aa).

The region spanning 494-765 (EAFKKGELPL…KIIKYLGVYL (272 aa)) is the Reverse transcriptase domain.

The protein is Transposon TX1 uncharacterized 149 kDa protein of Xenopus laevis (African clawed frog).